The sequence spans 303 residues: Probable 5-dehydro-4-deoxyglucarate dehydratase (303 aa).

It belongs to the DapA family.

The catalysed reaction is 5-dehydro-4-deoxy-D-glucarate + H(+) = 2,5-dioxopentanoate + CO2 + H2O. It participates in carbohydrate acid metabolism; D-glucarate degradation; 2,5-dioxopentanoate from D-glucarate: step 2/2. The sequence is that of Probable 5-dehydro-4-deoxyglucarate dehydratase from Paracidovorax citrulli (strain AAC00-1) (Acidovorax citrulli).